The chain runs to 357 residues: Serpentine receptor class epsilon-30 (357 aa).

7 helical membrane passes run 31 to 51 (IFEL…IFVM), 61 to 81 (LMFL…GKFI), 121 to 141 (LLIF…FGIL), 165 to 185 (IPII…LAII), 192 to 212 (FLAR…FLFI), 253 to 273 (LVVV…ALTF), and 283 to 303 (LIEN…MFSI).

It belongs to the nematode receptor-like protein sre family.

Its subcellular location is the membrane. The chain is Serpentine receptor class epsilon-30 (sre-30) from Caenorhabditis elegans.